Consider the following 312-residue polypeptide: Olfactory receptor 51I2 (312 aa).

Topologically, residues 1–25 are extracellular; that stretch reads MGLFNVTHPAFFLLTGIPGLESSHS. A glycan (N-linked (GlcNAc...) asparagine) is linked at Asn-5. The chain crosses the membrane as a helical span at residues 26–46; the sequence is WLSGPLCVMYAVALGGNTVIL. The Cytoplasmic portion of the chain corresponds to 47–54; the sequence is QAVRVEPS. The helical transmembrane segment at 55–75 threads the bilayer; that stretch reads LHEPMYYFLSMLSFSDVAISM. The Extracellular segment spans residues 76–99; it reads ATLPTVLRTFCLNARNITFDACLI. Cysteines 97 and 189 form a disulfide. A helical transmembrane segment spans residues 100 to 120; that stretch reads QMFLIHFFSMMESGILLAMSF. At 121 to 139 the chain is on the cytoplasmic side; that stretch reads DRYVAICDPLRYATVLTTE. The chain crosses the membrane as a helical span at residues 140-160; that stretch reads VIAAMGLGAAARSFITLFPLP. Residues 161-196 lie on the Extracellular side of the membrane; that stretch reads FLIKRLPICRSNVLSHSYCLHPDMMRLACADISINS. Residues 197–217 traverse the membrane as a helical segment; the sequence is IYGLFVLVSTFGMDLFFIFLS. Topologically, residues 218 to 237 are cytoplasmic; the sequence is YVLILRSVMATASREERLKA. The helical transmembrane segment at 238–258 threads the bilayer; it reads LNTCVSHILAVLAFYVPMIGV. Residues 259–273 lie on the Extracellular side of the membrane; that stretch reads STVHRFGKHVPCYIH. Residues 274–294 traverse the membrane as a helical segment; that stretch reads VLMSNVYLFVPPVLNPLIYSA. The Cytoplasmic portion of the chain corresponds to 295–312; sequence KTKEIRRAIFRMFHHIKI.

It belongs to the G-protein coupled receptor 1 family.

Its subcellular location is the cell membrane. In terms of biological role, odorant receptor. The polypeptide is Olfactory receptor 51I2 (OR51I2) (Homo sapiens (Human)).